A 153-amino-acid polypeptide reads, in one-letter code: Large ribosomal subunit protein uL22 (153 aa).

Residues 128–153 are disordered; sequence ADRRARRAAAKPAASASPAANEGVPA. Residues 137–147 show a composition bias toward low complexity; it reads AKPAASASPAA.

It belongs to the universal ribosomal protein uL22 family. Part of the 50S ribosomal subunit.

Functionally, this protein binds specifically to 23S rRNA; its binding is stimulated by other ribosomal proteins, e.g. L4, L17, and L20. It is important during the early stages of 50S assembly. It makes multiple contacts with different domains of the 23S rRNA in the assembled 50S subunit and ribosome. The globular domain of the protein is located near the polypeptide exit tunnel on the outside of the subunit, while an extended beta-hairpin is found that lines the wall of the exit tunnel in the center of the 70S ribosome. The chain is Large ribosomal subunit protein uL22 from Acidiphilium cryptum (strain JF-5).